The primary structure comprises 191 residues: MKRYLSLALAALVLTGCVPPDSVTPTPPVTIEPVTPPDVEVPPPVDTVPQPPKVQSIDWAVSVEPLVAQMVNSDEVATGSILLVDSVKNNTNGALQTAKATAALHQVLSSNKKFVLISPQQLGVAKQTLGLSEEDSFGSRSKAIGLARYVGAQYVLYSDVSGDVKSPTIEMQLMQTQTGEIIWSGNAPVQY.

The N-terminal stretch at 1–16 (MKRYLSLALAALVLTG) is a signal peptide. Cys17 carries N-palmitoyl cysteine lipidation. Residue Cys17 is the site of S-diacylglycerol cysteine attachment.

This sequence belongs to the LpoB family. Interacts with PBP1b.

It localises to the cell outer membrane. Regulator of peptidoglycan synthesis that is essential for the function of penicillin-binding protein 1B (PBP1b). In Yersinia pestis (strain D182038), this protein is Penicillin-binding protein activator LpoB.